The chain runs to 229 residues: Prolactin (229 aa).

An N-terminal signal peptide occupies residues 1-30 (MDSKGSAQKGSRLLLLLVVSNLLLCQGVVS). A disulfide bridge links Cys34 with Cys41. Phosphoserine occurs at positions 56, 64, and 120. 2 cysteine pairs are disulfide-bonded: Cys88–Cys204 and Cys221–Cys229.

The protein belongs to the somatotropin/prolactin family. In terms of assembly, interacts with PRLR.

Its subcellular location is the secreted. In terms of biological role, prolactin acts primarily on the mammary gland by promoting lactation. The protein is Prolactin (PRL) of Capra hircus (Goat).